The sequence spans 451 residues: Serine--tRNA ligase (451 aa).

Residue 258–260 (TSE) participates in L-serine binding. 289–291 (RSE) contacts ATP. Glutamate 312 contacts L-serine. 376–379 (EISS) provides a ligand contact to ATP. Residue serine 411 coordinates L-serine.

It belongs to the class-II aminoacyl-tRNA synthetase family. Type-1 seryl-tRNA synthetase subfamily. In terms of assembly, homodimer. The tRNA molecule binds across the dimer.

It is found in the cytoplasm. The catalysed reaction is tRNA(Ser) + L-serine + ATP = L-seryl-tRNA(Ser) + AMP + diphosphate + H(+). It carries out the reaction tRNA(Sec) + L-serine + ATP = L-seryl-tRNA(Sec) + AMP + diphosphate + H(+). It participates in aminoacyl-tRNA biosynthesis; selenocysteinyl-tRNA(Sec) biosynthesis; L-seryl-tRNA(Sec) from L-serine and tRNA(Sec): step 1/1. Its function is as follows. Catalyzes the attachment of serine to tRNA(Ser). Is also able to aminoacylate tRNA(Sec) with serine, to form the misacylated tRNA L-seryl-tRNA(Sec), which will be further converted into selenocysteinyl-tRNA(Sec). The sequence is that of Serine--tRNA ligase from Bordetella pertussis (strain Tohama I / ATCC BAA-589 / NCTC 13251).